We begin with the raw amino-acid sequence, 351 residues long: Putative ABC transporter permease protein MJ0876 (351 aa).

The next 9 membrane-spanning stretches (helical) occupy residues 4-24 (VGIL…ALYL), 59-79 (LPPI…GLML), 99-119 (VLMV…FEIF), 124-144 (ILVA…IIAL), 152-172 (VIIV…YLIA), 196-216 (GDVI…MFLI), 249-269 (FITG…IIAP), 284-304 (LVPA…ILSL), and 322-342 (PLPI…YLVY).

The protein belongs to the binding-protein-dependent transport system permease family. FecCD subfamily.

It localises to the cell membrane. Functionally, probably part of a binding-protein-dependent transport system. Probably responsible for the translocation of the substrate across the membrane. This is Putative ABC transporter permease protein MJ0876 from Methanocaldococcus jannaschii (strain ATCC 43067 / DSM 2661 / JAL-1 / JCM 10045 / NBRC 100440) (Methanococcus jannaschii).